The following is a 122-amino-acid chain: Large ribosomal subunit protein uL14 (122 aa).

The protein belongs to the universal ribosomal protein uL14 family. In terms of assembly, part of the 50S ribosomal subunit. Forms a cluster with proteins L3 and L19. In the 70S ribosome, L14 and L19 interact and together make contacts with the 16S rRNA in bridges B5 and B8.

Binds to 23S rRNA. Forms part of two intersubunit bridges in the 70S ribosome. The sequence is that of Large ribosomal subunit protein uL14 from Heliobacterium modesticaldum (strain ATCC 51547 / Ice1).